The chain runs to 182 residues: MEEKKRCEESEKIKEQENETLPNEDSPSMGKKVAELENEISNLKDLYLRKQAEFENFRKRLEKDKENFIKFANENIMKDIINFLDNLERAIDSSKQSKDFDTLLSGISMIESEVLSSFDKKYNLKKFGKPGEDFDPSQHEAISIEEKEGVKTPEIVEVYQKGYCYNNRVLRTAKVKVAQSKN.

Residues 1–17 are compositionally biased toward basic and acidic residues; it reads MEEKKRCEESEKIKEQE. The segment at 1–33 is disordered; it reads MEEKKRCEESEKIKEQENETLPNEDSPSMGKKV.

It belongs to the GrpE family. As to quaternary structure, homodimer.

The protein localises to the cytoplasm. Participates actively in the response to hyperosmotic and heat shock by preventing the aggregation of stress-denatured proteins, in association with DnaK and GrpE. It is the nucleotide exchange factor for DnaK and may function as a thermosensor. Unfolded proteins bind initially to DnaJ; upon interaction with the DnaJ-bound protein, DnaK hydrolyzes its bound ATP, resulting in the formation of a stable complex. GrpE releases ADP from DnaK; ATP binding to DnaK triggers the release of the substrate protein, thus completing the reaction cycle. Several rounds of ATP-dependent interactions between DnaJ, DnaK and GrpE are required for fully efficient folding. This is Protein GrpE from Borrelia hermsii (strain HS1 / DAH).